The chain runs to 322 residues: Secreted RxLR effector protein RXLR-C17 (322 aa).

A signal peptide spans 1–25 (MREPAFSFRLHLFAAMILLVDVFSA). A RxLR-dEER motif is present at residues 43-62 (RQLRARDSQAKNYVIRDEER). A glycan (N-linked (GlcNAc...) asparagine) is linked at Asn-73.

This sequence belongs to the RxLR effector family.

It localises to the secreted. The protein resides in the host cytoplasm. Its subcellular location is the host nucleus. In terms of biological role, secreted effector that suppresses pattern-triggered immunity (PTI) in plant host. This is Secreted RxLR effector protein RXLR-C17 from Plasmopara halstedii (Downy mildew of sunflower).